A 508-amino-acid polypeptide reads, in one-letter code: UDP-N-acetylmuramoyl-L-alanyl-D-glutamate--L-lysine ligase (508 aa).

S47 serves as a coordination point for UDP-N-acetyl-alpha-D-muramoyl-L-alanyl-D-glutamate. Residue 124–130 participates in ATP binding; the sequence is GTKGKTT. Residues 168 to 169, S195, and R203 contribute to the UDP-N-acetyl-alpha-D-muramoyl-L-alanyl-D-glutamate site; that span reads TT. An N6-carboxylysine modification is found at K237. An L-lysine recognition motif motif is present at residues 425 to 428; sequence DDPA.

The protein belongs to the MurCDEF family. MurE subfamily. Post-translationally, carboxylation is probably crucial for Mg(2+) binding and, consequently, for the gamma-phosphate positioning of ATP.

It localises to the cytoplasm. It catalyses the reaction UDP-N-acetyl-alpha-D-muramoyl-L-alanyl-D-glutamate + L-lysine + ATP = UDP-N-acetyl-alpha-D-muramoyl-L-alanyl-gamma-D-glutamyl-L-lysine + ADP + phosphate + H(+). It functions in the pathway cell wall biogenesis; peptidoglycan biosynthesis. In terms of biological role, catalyzes the addition of L-lysine to the nucleotide precursor UDP-N-acetylmuramoyl-L-alanyl-D-glutamate (UMAG) in the biosynthesis of bacterial cell-wall peptidoglycan. In Enterococcus faecalis (strain ATCC 700802 / V583), this protein is UDP-N-acetylmuramoyl-L-alanyl-D-glutamate--L-lysine ligase.